Consider the following 96-residue polypeptide: ATP synthase subunit f, mitochondrial (96 aa).

Belongs to the ATPase F chain family.

It localises to the mitochondrion. Its subcellular location is the mitochondrion inner membrane. Mitochondrial membrane ATP synthase (F(1)F(0) ATP synthase or Complex V) produces ATP from ADP in the presence of a proton gradient across the membrane which is generated by electron transport complexes of the respiratory chain. F-type ATPases consist of two structural domains, F(1) - containing the extramembraneous catalytic core and F(0) - containing the membrane proton channel, linked together by a central stalk and a peripheral stalk. During catalysis, ATP synthesis in the catalytic domain of F(1) is coupled via a rotary mechanism of the central stalk subunits to proton translocation. This chain is ATP synthase subunit f, mitochondrial (atp17), found in Schizosaccharomyces pombe (strain 972 / ATCC 24843) (Fission yeast).